A 98-amino-acid chain; its full sequence is Bombyxin E-1 (98 aa).

The N-terminal stretch at 1–19 is a signal peptide; it reads MNRPVFLVLLLTGFLCIAA. At glutamine 20 the chain carries Pyrrolidone carboxylic acid. 3 disulfide bridges follow: cysteine 29-cysteine 85, cysteine 41-cysteine 98, and cysteine 84-cysteine 89. A propeptide spans 50–75 (c peptide like); sequence SESSLASYSSRGWPWLPTPNFNKRAI.

This sequence belongs to the insulin family. Heterodimer of a B chain and an A chain linked by two disulfide bonds.

The protein localises to the secreted. Its function is as follows. PTTH is a brain peptide responsible for activation of prothoracic glands to produce ecdysone in insects. The polypeptide is Bombyxin E-1 (BBXE1) (Bombyx mori (Silk moth)).